Reading from the N-terminus, the 1308-residue chain is Tau-tubulin kinase 1 (1308 aa).

A Protein kinase domain is found at 34–297 (WKVLKKIGGG…LIMSVFENSM (264 aa)). ATP-binding positions include 40-48 (IGGGGFGEI) and K63. D154 serves as the catalytic Proton acceptor. Disordered regions lie at residues 364 to 397 (LSDQ…GPEA), 418 to 448 (PCVE…PVRS), 474 to 671 (ERRS…APPF), 720 to 899 (QVPL…AGGG), 985 to 1085 (EMES…LARL), and 1097 to 1308 (RLAS…PGAR). A Phosphoserine modification is found at S441. Residues 485–496 (PSRQACSSQPAQ) are compositionally biased toward polar residues. S541 carries the post-translational modification Phosphoserine. Composition is skewed to basic and acidic residues over residues 541–555 (SKEW…ELKD) and 574–589 (ELRP…RRLG). Residues 638–647 (SPSHSPLHSG) show a composition bias toward low complexity. Positions 735–769 (GEEEEEEEEEEEEEEEEEEEEEEEEEEEEEEEEEA) are enriched in acidic residues. Over residues 786 to 795 (GSERSTERSQ) the composition is skewed to basic and acidic residues. Polar residues-rich tracts occupy residues 868 to 885 (PTGS…SSIL) and 1020 to 1035 (ASQQ…TISP). The segment covering 1097–1107 (RLASGASSSSS) has biased composition (low complexity).

The protein belongs to the protein kinase superfamily. CK1 Ser/Thr protein kinase family. Mg(2+) is required as a cofactor. Requires Mn(2+) as cofactor. Expressed in the brain. Strong expression in the cortical layers, the CA1 layers of the hippocampus and the granular layer of the cerebellum. Also expressed in the large cortical pyramidal cells in the temporal cortex, the CA1 pyramidal neurons and the cerebellum granular neurons.

It localises to the cytoplasm. It carries out the reaction L-seryl-[protein] + ATP = O-phospho-L-seryl-[protein] + ADP + H(+). The catalysed reaction is L-threonyl-[protein] + ATP = O-phospho-L-threonyl-[protein] + ADP + H(+). Its function is as follows. Serine/threonine kinase which is able to phosphorylate TAU on serine, threonine and tyrosine residues. Induces aggregation of TAU. The chain is Tau-tubulin kinase 1 (Ttbk1) from Mus musculus (Mouse).